The following is a 155-amino-acid chain: SsrA-binding protein (155 aa).

This sequence belongs to the SmpB family.

It localises to the cytoplasm. Required for rescue of stalled ribosomes mediated by trans-translation. Binds to transfer-messenger RNA (tmRNA), required for stable association of tmRNA with ribosomes. tmRNA and SmpB together mimic tRNA shape, replacing the anticodon stem-loop with SmpB. tmRNA is encoded by the ssrA gene; the 2 termini fold to resemble tRNA(Ala) and it encodes a 'tag peptide', a short internal open reading frame. During trans-translation Ala-aminoacylated tmRNA acts like a tRNA, entering the A-site of stalled ribosomes, displacing the stalled mRNA. The ribosome then switches to translate the ORF on the tmRNA; the nascent peptide is terminated with the 'tag peptide' encoded by the tmRNA and targeted for degradation. The ribosome is freed to recommence translation, which seems to be the essential function of trans-translation. The polypeptide is SsrA-binding protein (Streptococcus agalactiae serotype Ia (strain ATCC 27591 / A909 / CDC SS700)).